The primary structure comprises 1756 residues: Transposon Ty1-BR Gag-Pol polyprotein (1756 aa).

Polar residues-rich tracts occupy residues 1–10 (MESQQLSNYP), 48–60 (TKANSQQTTTPAS), and 127–152 (QSQFPQYPSSVGTPLSTPSPESGNTF). Disordered regions lie at residues 1-93 (MESQ…MMTQ), 126-173 (PQSQ…RPPP), and 352-421 (GSRN…SKST). Residues 153-165 (TDSSSADSDMTST) are compositionally biased toward low complexity. An RNA-binding region spans residues 299 to 401 (NNGIHINNKV…NSKSKTARAH (103 aa)). A compositionally biased stretch (low complexity) spans 402-418 (NVSTSNNSPSTDNDSIS). The residue at position 416 (S416) is a Phosphoserine. Residue D461 is the For protease activity; shared with dimeric partner of the active site. Residues 583–640 (NVHTSESTRKYPYPFIHRMLAHANAQTIRYSLKNNTITYFNESDVDWSSAIDYQCPDC) form an integrase-type zinc finger-like region. One can recognise an Integrase catalytic domain in the interval 660-835 (NSYEPFQYLH…AGLDISTLLP (176 aa)). Residues D671 and D736 each contribute to the Mg(2+) site. 2 disordered regions span residues 956–1088 (SKAV…TEKR) and 1142–1173 (PTELSDSFKELPPINSRQTNSSLGGIGDSNAY). Over residues 960–969 (SPTDSTPPST) the composition is skewed to low complexity. Polar residues-rich tracts occupy residues 1005-1017 (STPQISDIESTDS) and 1031-1043 (MSQSNTHESSYAS). The span at 1044-1053 (KSKDFRHSDS) shows a compositional bias: basic and acidic residues. Over residues 1054-1082 (YSDNETNHTNVPISSTGGTNNKTVPQTSE) the composition is skewed to polar residues. The Bipartite nuclear localization signal signature appears at 1179–1213 (KKRSLEDNETEIKVSRDTWNTKNMRSLEPPRSKKR). One can recognise a Reverse transcriptase Ty1/copia-type domain in the interval 1339 to 1477 (NNYYITQLDI…DILGLEIKYQ (139 aa)). D1347, D1428, D1429, D1611, E1653, and D1686 together coordinate Mg(2+). Residues 1611–1753 (DASYGNQPYY…IKTFKLLTNK (143 aa)) enclose the RNase H Ty1/copia-type domain.

As to quaternary structure, the capsid protein forms a homotrimer, from which the VLPs are assembled. The protease is a homodimer, whose active site consists of two apposed aspartic acid residues. Initially, virus-like particles (VLPs) are composed of the structural unprocessed proteins Gag and Gag-Pol, and also contain the host initiator methionine tRNA (tRNA(i)-Met) which serves as a primer for minus-strand DNA synthesis, and a dimer of genomic Ty RNA. Processing of the polyproteins occurs within the particle and proceeds by an ordered pathway, called maturation. First, the protease (PR) is released by autocatalytic cleavage of the Gag-Pol polyprotein yielding capsid protein p45 and a Pol-p154 precursor protein. This cleavage is a prerequisite for subsequent processing of Pol-p154 at the remaining sites to release the mature structural and catalytic proteins. Maturation takes place prior to the RT reaction and is required to produce transposition-competent VLPs.

The protein resides in the cytoplasm. Its subcellular location is the nucleus. It catalyses the reaction DNA(n) + a 2'-deoxyribonucleoside 5'-triphosphate = DNA(n+1) + diphosphate. It carries out the reaction Endonucleolytic cleavage to 5'-phosphomonoester.. Its function is as follows. Capsid protein (CA) is the structural component of the virus-like particle (VLP), forming the shell that encapsulates the retrotransposons dimeric RNA genome. The particles are assembled from trimer-clustered units and there are holes in the capsid shells that allow for the diffusion of macromolecules. CA also has nucleocapsid-like chaperone activity, promoting primer tRNA(i)-Met annealing to the multipartite primer-binding site (PBS), dimerization of Ty1 RNA and initiation of reverse transcription. In terms of biological role, the aspartyl protease (PR) mediates the proteolytic cleavages of the Gag and Gag-Pol polyproteins after assembly of the VLP. Reverse transcriptase/ribonuclease H (RT) is a multifunctional enzyme that catalyzes the conversion of the retro-elements RNA genome into dsDNA within the VLP. The enzyme displays a DNA polymerase activity that can copy either DNA or RNA templates, and a ribonuclease H (RNase H) activity that cleaves the RNA strand of RNA-DNA heteroduplexes during plus-strand synthesis and hydrolyzes RNA primers. The conversion leads to a linear dsDNA copy of the retrotransposon that includes long terminal repeats (LTRs) at both ends. Functionally, integrase (IN) targets the VLP to the nucleus, where a subparticle preintegration complex (PIC) containing at least integrase and the newly synthesized dsDNA copy of the retrotransposon must transit the nuclear membrane. Once in the nucleus, integrase performs the integration of the dsDNA into the host genome. In Saccharomyces cerevisiae (strain ATCC 204508 / S288c) (Baker's yeast), this protein is Transposon Ty1-BR Gag-Pol polyprotein (TY1B-BR).